A 361-amino-acid polypeptide reads, in one-letter code: Beta-hexosaminidase (361 aa).

Residues D69, R77, R144, and K174–H175 contribute to the substrate site. The active-site Proton donor/acceptor is H187. D258 serves as the catalytic Nucleophile.

The protein belongs to the glycosyl hydrolase 3 family. NagZ subfamily.

It localises to the cytoplasm. The catalysed reaction is Hydrolysis of terminal non-reducing N-acetyl-D-hexosamine residues in N-acetyl-beta-D-hexosaminides.. The protein operates within cell wall biogenesis; peptidoglycan recycling. Its function is as follows. Plays a role in peptidoglycan recycling by cleaving the terminal beta-1,4-linked N-acetylglucosamine (GlcNAc) from peptide-linked peptidoglycan fragments, giving rise to free GlcNAc, anhydro-N-acetylmuramic acid and anhydro-N-acetylmuramic acid-linked peptides. The chain is Beta-hexosaminidase from Neisseria gonorrhoeae (strain ATCC 700825 / FA 1090).